The sequence spans 99 residues: Large ribosomal subunit protein bL28 (99 aa).

This sequence belongs to the bacterial ribosomal protein bL28 family.

This Rhizobium leguminosarum bv. trifolii (strain WSM2304) protein is Large ribosomal subunit protein bL28.